The sequence spans 61 residues: Small ribosomal subunit protein uS14 (61 aa).

4 residues coordinate Zn(2+): Cys24, Cys27, Cys40, and Cys43.

It belongs to the universal ribosomal protein uS14 family. Zinc-binding uS14 subfamily. As to quaternary structure, part of the 30S ribosomal subunit. Contacts proteins S3 and S10. The cofactor is Zn(2+).

Functionally, binds 16S rRNA, required for the assembly of 30S particles and may also be responsible for determining the conformation of the 16S rRNA at the A site. The sequence is that of Small ribosomal subunit protein uS14 from Aliarcobacter butzleri (strain RM4018) (Arcobacter butzleri).